Reading from the N-terminus, the 184-residue chain is Crossover junction endodeoxyribonuclease RuvC (184 aa).

Active-site residues include D11, E73, and D147. 3 residues coordinate Mg(2+): D11, E73, and D147.

It belongs to the RuvC family. In terms of assembly, homodimer which binds Holliday junction (HJ) DNA. The HJ becomes 2-fold symmetrical on binding to RuvC with unstacked arms; it has a different conformation from HJ DNA in complex with RuvA. In the full resolvosome a probable DNA-RuvA(4)-RuvB(12)-RuvC(2) complex forms which resolves the HJ. It depends on Mg(2+) as a cofactor.

It is found in the cytoplasm. It catalyses the reaction Endonucleolytic cleavage at a junction such as a reciprocal single-stranded crossover between two homologous DNA duplexes (Holliday junction).. Its function is as follows. The RuvA-RuvB-RuvC complex processes Holliday junction (HJ) DNA during genetic recombination and DNA repair. Endonuclease that resolves HJ intermediates. Cleaves cruciform DNA by making single-stranded nicks across the HJ at symmetrical positions within the homologous arms, yielding a 5'-phosphate and a 3'-hydroxyl group; requires a central core of homology in the junction. The consensus cleavage sequence is 5'-(A/T)TT(C/G)-3'. Cleavage occurs on the 3'-side of the TT dinucleotide at the point of strand exchange. HJ branch migration catalyzed by RuvA-RuvB allows RuvC to scan DNA until it finds its consensus sequence, where it cleaves and resolves the cruciform DNA. The polypeptide is Crossover junction endodeoxyribonuclease RuvC (Neisseria gonorrhoeae (strain ATCC 700825 / FA 1090)).